We begin with the raw amino-acid sequence, 347 residues long: tRNA N6-adenosine threonylcarbamoyltransferase (347 aa).

Positions 115 and 119 each coordinate Fe cation. Substrate-binding positions include 138 to 142 (LVSGG), aspartate 171, glycine 184, and asparagine 277. Residue aspartate 305 participates in Fe cation binding.

The protein belongs to the KAE1 / TsaD family. Requires Fe(2+) as cofactor.

The protein localises to the cytoplasm. The enzyme catalyses L-threonylcarbamoyladenylate + adenosine(37) in tRNA = N(6)-L-threonylcarbamoyladenosine(37) in tRNA + AMP + H(+). In terms of biological role, required for the formation of a threonylcarbamoyl group on adenosine at position 37 (t(6)A37) in tRNAs that read codons beginning with adenine. Is involved in the transfer of the threonylcarbamoyl moiety of threonylcarbamoyl-AMP (TC-AMP) to the N6 group of A37, together with TsaE and TsaB. TsaD likely plays a direct catalytic role in this reaction. The protein is tRNA N6-adenosine threonylcarbamoyltransferase of Polaromonas sp. (strain JS666 / ATCC BAA-500).